Reading from the N-terminus, the 330-residue chain is RNA polymerase sigma factor RpoS (330 aa).

The segment at 56–89 (DATQLYLGEIGYSPLLTAEEEVYFARRALRGDVA) is sigma-70 factor domain-1. A sigma-70 factor domain-2 region spans residues 94 to 164 (MIESNLRLVV…ERAIMNQTRT (71 aa)). An Interaction with polymerase core subunit RpoC motif is present at residues 118–121 (DLIE). The tract at residues 174 to 249 (ELNVYLRTAR…DEKENGPEDT (76 aa)) is sigma-70 factor domain-3. The interval 262–315 (WLFELNAKQREVLARRFGLLGYEAATLEDVGREIGLTRERVRQIQVEGLRRLRE) is sigma-70 factor domain-4. A DNA-binding region (H-T-H motif) is located at residues 288-307 (LEDVGREIGLTRERVRQIQV).

It belongs to the sigma-70 factor family. RpoS subfamily. In terms of assembly, interacts with the RNA polymerase core enzyme.

The protein localises to the cytoplasm. Functionally, sigma factors are initiation factors that promote the attachment of RNA polymerase to specific initiation sites and are then released. This sigma factor is the master transcriptional regulator of the stationary phase and the general stress response. The sequence is that of RNA polymerase sigma factor RpoS from Shigella flexneri.